Here is a 383-residue protein sequence, read N- to C-terminus: D-alanine--D-alanine ligase (383 aa).

Residues 169–373 (KALLRAAGLP…YPQLVDRLVR (205 aa)) enclose the ATP-grasp domain. Residue 196-251 (QERLGLPVFVKPARGGSSIGISRVEAWADLDTAIKAARASDPKVLVESAIVGREIE) coordinates ATP. Mg(2+) contacts are provided by Asp-327, Glu-340, and Asn-342.

Belongs to the D-alanine--D-alanine ligase family. It depends on Mg(2+) as a cofactor. Requires Mn(2+) as cofactor.

It localises to the cytoplasm. The enzyme catalyses 2 D-alanine + ATP = D-alanyl-D-alanine + ADP + phosphate + H(+). It participates in cell wall biogenesis; peptidoglycan biosynthesis. Its function is as follows. Cell wall formation. The sequence is that of D-alanine--D-alanine ligase from Frankia casuarinae (strain DSM 45818 / CECT 9043 / HFP020203 / CcI3).